The chain runs to 51 residues: Protein SspM (51 aa).

This sequence belongs to the alpha/beta-type SASP family.

In Mycolicibacterium phlei (Mycobacterium phlei), this protein is Protein SspM (sspM).